The following is a 256-amino-acid chain: MHPYFSLAGRIALVTGGSRGIGQMIAQGLLEAGARVFICARDAEACADTATRLSAYGDCQAIPADLSSEAGARRLAQALGELSARLDILVNNAGTSWGAALESYPVSGWEKVMQLNVTSVFSCIQQLLPLLRRSASAENPARVINIGSVAGISAMGEQAYAYGPSKAALHQLSRMLAKELVGEHINVNVIAPGRFPSRMTRHIANDPQALEADSASIPMGRWGRPEEMAALAISLAGTAGAYMTGNVIPIDGGFHL.

14 to 38 (VTGGSRGIGQMIAQGLLEAGARVFI) contributes to the NADP(+) binding site. A substrate-binding site is contributed by Ser148. Residue Tyr162 is the Proton acceptor of the active site.

The protein belongs to the short-chain dehydrogenases/reductases (SDR) family.

It carries out the reaction a (3R)-hydroxyacyl-[ACP] + NADP(+) = a 3-oxoacyl-[ACP] + NADPH + H(+). Its pathway is lipid metabolism; rhamnolipid biosynthesis. In terms of biological role, required for the synthesis of the beta-hydroxy acid moiety of rhamnolipids. The sequence is that of Rhamnolipids biosynthesis 3-oxoacyl-[acyl-carrier-protein] reductase (rhlG) from Pseudomonas aeruginosa (strain ATCC 15692 / DSM 22644 / CIP 104116 / JCM 14847 / LMG 12228 / 1C / PRS 101 / PAO1).